A 201-amino-acid polypeptide reads, in one-letter code: Probable quinol oxidase subunit 3 (201 aa).

5 helical membrane passes run 20 to 40 (LGFW…FATL), 62 to 82 (LVLI…IAIY), 91 to 111 (LMLI…GFEI), 133 to 153 (FFIL…WIIC), and 180 to 200 (FLDV…MVFS).

The protein belongs to the cytochrome c oxidase subunit 3 family.

It localises to the cell membrane. The enzyme catalyses 2 a quinol + O2 = 2 a quinone + 2 H2O. Catalyzes quinol oxidation with the concomitant reduction of oxygen to water. The polypeptide is Probable quinol oxidase subunit 3 (qoxC) (Staphylococcus saprophyticus subsp. saprophyticus (strain ATCC 15305 / DSM 20229 / NCIMB 8711 / NCTC 7292 / S-41)).